The sequence spans 113 residues: Cytochrome c oxidase subunit 7A2-like, mitochondrial (113 aa).

The N-terminal 54 residues, 1–54, are a transit peptide targeting the mitochondrion; sequence MYYKFSSFTQKLAGAWASEAYTPQGLKPVSTEAPPIIFATPTKLTSSVTAYDYS. Residue Lys68 is modified to N6-acetyllysine. The chain crosses the membrane as a helical span at residues 81 to 106; the sequence is PDQMLYRTTMALTLGGTIYCLIALYM.

Belongs to the cytochrome c oxidase VIIa family. As to quaternary structure, interacts with the mitochondrial respiratory complexes III (CIII) and IV (CIV), promoting their association.

It is found in the mitochondrion inner membrane. It functions in the pathway energy metabolism; oxidative phosphorylation. Functionally, assembly factor that mediates the formation of some mitochondrial respiratory supercomplexes (respirasomes), thereby promoting oxidative phosphorylation and energy metabolism. Acts as a molecular adapter that associates with both mitochondrial respiratory complexes III (CIII) and IV (CIV), promoting their association. Mediates the formation of various mitochondrial respiratory supercomplexes, such as MCIII(2)IV(2), composed of two CIII and two CIV, and the CS-respirasome (MCI(1)III(2)IV(2)), composed of one CI, two CIII and two CIV. Not involved in the formation of the canonical respirasome (MCI(1)III(2)IV(1)), composed of one CI, two CIII and one CIV. The formation of different respirasomes is important for cell adaptation to oxygen conditions and prevent metabolic exhaustion: supercomplexes mediated by COX7A2L/SCAF1 are required to maintain oxidative phosphorylation upon low oxygen conditions and promote metabolic rewiring toward glycolysis. The polypeptide is Cytochrome c oxidase subunit 7A2-like, mitochondrial (Mus musculus (Mouse)).